The following is a 445-amino-acid chain: Exodeoxyribonuclease 7 large subunit (445 aa).

Belongs to the XseA family. Heterooligomer composed of large and small subunits.

Its subcellular location is the cytoplasm. It carries out the reaction Exonucleolytic cleavage in either 5'- to 3'- or 3'- to 5'-direction to yield nucleoside 5'-phosphates.. Its function is as follows. Bidirectionally degrades single-stranded DNA into large acid-insoluble oligonucleotides, which are then degraded further into small acid-soluble oligonucleotides. This is Exodeoxyribonuclease 7 large subunit from Geotalea daltonii (strain DSM 22248 / JCM 15807 / FRC-32) (Geobacter daltonii).